The primary structure comprises 395 residues: MNEQGLSEKEIFSYLENAKSEDTDYYRVLSSMCTHPHKIAVEANRLFIEANLGDLGLFAGASRLEQEVVGMLGELLHAPSIDVPFGGSCESSACGYLTTGGTESNIQAVRGMKNLVTTGKKELKGAPNIVIPESAHFSFDKVADMMGIEVRRASLDSEFRVDMASIESLIDANTIGLIGIAGNTEFGQIDPIDKLSEIALENELFLHIDAAFGGFVIPFLEKPQPFDFKLPGVTSIAVDPHKMGLSTIPSGALLFRSASFLDSLKVNTPYLTTKAQFTLTGTRSGASAAATCAVMKYLGNEGYRKNVQYCMQLTEKLVIEARKIGFEPLLEPVMNVVALKVPNPDFVREQMLERFGWNVSITRTPRALRLVLMPHNTLEDIEIFVQDLKEVTVEI.

An N6-(pyridoxal phosphate)lysine modification is found at K242.

Belongs to the group II decarboxylase family. MfnA subfamily. The cofactor is pyridoxal 5'-phosphate.

The enzyme catalyses L-tyrosine + H(+) = tyramine + CO2. It catalyses the reaction L-aspartate + H(+) = beta-alanine + CO2. It functions in the pathway cofactor biosynthesis; methanofuran biosynthesis. Its pathway is cofactor biosynthesis; coenzyme A biosynthesis. Its function is as follows. Catalyzes the decarboxylation of L-tyrosine to produce tyramine for methanofuran biosynthesis. Can also catalyze the decarboxylation of L-aspartate to produce beta-alanine for coenzyme A (CoA) biosynthesis. The protein is Probable L-tyrosine/L-aspartate decarboxylase of Methanosarcina acetivorans (strain ATCC 35395 / DSM 2834 / JCM 12185 / C2A).